Here is a 33-residue protein sequence, read N- to C-terminus: Photosystem II reaction center protein Psb30 (33 aa).

The chain crosses the membrane as a helical span at residues 5-25 (IVFQLTSLVLILAAGPLVVVL).

It belongs to the Psb30/Ycf12 family. In terms of assembly, PSII is composed of 1 copy each of membrane proteins PsbA, PsbB, PsbC, PsbD, PsbE, PsbF, PsbH, PsbI, PsbJ, PsbK, PsbL, PsbM, PsbT, PsbX, PsbY, PsbZ, Psb30/Ycf12, peripheral proteins of the oxygen-evolving complex and a large number of cofactors. It forms dimeric complexes.

The protein localises to the plastid. It localises to the chloroplast thylakoid membrane. In terms of biological role, a core subunit of photosystem II (PSII), probably helps stabilize the reaction center. This chain is Photosystem II reaction center protein Psb30, found in Tetradesmus obliquus (Green alga).